Here is a 237-residue protein sequence, read N- to C-terminus: NADPH-dependent FMN reductase ArsH (237 aa).

FMN contacts are provided by residues 39–46 and 102–107; these read SNRECSYS and SPERHG.

Belongs to the ArsH family. Homotetramer. It depends on FMN as a cofactor.

Its function is as follows. Has NADPH-dependent FMN reductase activity and high NADPH-dependent ferric reductase activity with highest activity for Fe(3+) as substrate. No activity with NADH, iron trichloride, Cu(2+) or Ag(+). May be involved in cytosolic ferric iron assimilation as an NADPH-dependent ferric reductase in vivo. This Acidithiobacillus ferrooxidans (strain ATCC 23270 / DSM 14882 / CIP 104768 / NCIMB 8455) (Ferrobacillus ferrooxidans (strain ATCC 23270)) protein is NADPH-dependent FMN reductase ArsH.